Reading from the N-terminus, the 62-residue chain is UPF0434 protein FTM_0733 (62 aa).

It belongs to the UPF0434 family.

The chain is UPF0434 protein FTM_0733 from Francisella tularensis subsp. mediasiatica (strain FSC147).